Here is a 290-residue protein sequence, read N- to C-terminus: Pyridoxal kinase PdxY (290 aa).

Residue Ser-14 coordinates substrate. ATP contacts are provided by Asp-116 and Glu-153. Asp-226 contacts substrate.

Belongs to the pyridoxine kinase family. PdxY subfamily. Homodimer. Mg(2+) serves as cofactor.

It catalyses the reaction pyridoxal + ATP = pyridoxal 5'-phosphate + ADP + H(+). The protein operates within cofactor metabolism; pyridoxal 5'-phosphate salvage; pyridoxal 5'-phosphate from pyridoxal: step 1/1. Pyridoxal kinase involved in the salvage pathway of pyridoxal 5'-phosphate (PLP). Catalyzes the phosphorylation of pyridoxal to PLP. The polypeptide is Pyridoxal kinase PdxY (Rubrobacter xylanophilus (strain DSM 9941 / JCM 11954 / NBRC 16129 / PRD-1)).